The sequence spans 86 residues: Serine protease inhibitor Kazal-type 4 (86 aa).

The first 26 residues, 1-26 (MAMHLWLVTLTLVPLLGMDRELMVSA), serve as a signal peptide directing secretion. Residues 31 to 86 (FPRMPFCEHMAELPNCPQTPNLICGTDGLTYENECHLCLTRMKTMKDIQIMKDGQC) form the Kazal-like domain. Cystine bridges form between Cys37/Cys68, Cys46/Cys65, and Cys54/Cys86.

In terms of tissue distribution, expressed in the intestinal tract.

The protein resides in the secreted. This chain is Serine protease inhibitor Kazal-type 4 (Spink4), found in Mus musculus (Mouse).